We begin with the raw amino-acid sequence, 220 residues long: Putative O-methyltransferase Mjls_4009 (220 aa).

S-adenosyl-L-methionine contacts are provided by residues V47, E69, 71-72, S77, D95, and V96; that span reads GT. D143 contributes to the substrate binding site. D145 serves as a coordination point for S-adenosyl-L-methionine.

It belongs to the class I-like SAM-binding methyltransferase superfamily. Cation-dependent O-methyltransferase family.

The chain is Putative O-methyltransferase Mjls_4009 from Mycobacterium sp. (strain JLS).